The following is a 110-amino-acid chain: Large ribosomal subunit protein uL22 (110 aa).

This sequence belongs to the universal ribosomal protein uL22 family. As to quaternary structure, part of the 50S ribosomal subunit.

Functionally, this protein binds specifically to 23S rRNA; its binding is stimulated by other ribosomal proteins, e.g. L4, L17, and L20. It is important during the early stages of 50S assembly. It makes multiple contacts with different domains of the 23S rRNA in the assembled 50S subunit and ribosome. Its function is as follows. The globular domain of the protein is located near the polypeptide exit tunnel on the outside of the subunit, while an extended beta-hairpin is found that lines the wall of the exit tunnel in the center of the 70S ribosome. The polypeptide is Large ribosomal subunit protein uL22 (Stutzerimonas stutzeri (strain A1501) (Pseudomonas stutzeri)).